A 172-amino-acid polypeptide reads, in one-letter code: MKETIRIIGIDPGLRRTGWGIVESLGNSLHFIGSGTVTSNAEMDLASRLCQLHEGLSKVLHEYMPHEAAVEHTFVNKDATATLKLGQARGIALLAPAQAGLPVAEYAPNAVKKAVIGVGHGEKQQIHMMVKVLMPRASFDTSDAADALAIAICHAHHRQSIASARRLQQLIA.

Active-site residues include D11, E71, and D143. Mg(2+) is bound by residues D11, E71, and D143.

It belongs to the RuvC family. Homodimer which binds Holliday junction (HJ) DNA. The HJ becomes 2-fold symmetrical on binding to RuvC with unstacked arms; it has a different conformation from HJ DNA in complex with RuvA. In the full resolvosome a probable DNA-RuvA(4)-RuvB(12)-RuvC(2) complex forms which resolves the HJ. Requires Mg(2+) as cofactor.

It is found in the cytoplasm. It catalyses the reaction Endonucleolytic cleavage at a junction such as a reciprocal single-stranded crossover between two homologous DNA duplexes (Holliday junction).. In terms of biological role, the RuvA-RuvB-RuvC complex processes Holliday junction (HJ) DNA during genetic recombination and DNA repair. Endonuclease that resolves HJ intermediates. Cleaves cruciform DNA by making single-stranded nicks across the HJ at symmetrical positions within the homologous arms, yielding a 5'-phosphate and a 3'-hydroxyl group; requires a central core of homology in the junction. The consensus cleavage sequence is 5'-(A/T)TT(C/G)-3'. Cleavage occurs on the 3'-side of the TT dinucleotide at the point of strand exchange. HJ branch migration catalyzed by RuvA-RuvB allows RuvC to scan DNA until it finds its consensus sequence, where it cleaves and resolves the cruciform DNA. The sequence is that of Crossover junction endodeoxyribonuclease RuvC from Brucella anthropi (strain ATCC 49188 / DSM 6882 / CCUG 24695 / JCM 21032 / LMG 3331 / NBRC 15819 / NCTC 12168 / Alc 37) (Ochrobactrum anthropi).